Reading from the N-terminus, the 548-residue chain is Chaperonin GroEL (548 aa).

ATP contacts are provided by residues 30–33, K51, 87–91, G415, 479–481, and D495; these read TLGP, DGTTT, and NAA.

This sequence belongs to the chaperonin (HSP60) family. In terms of assembly, forms a cylinder of 14 subunits composed of two heptameric rings stacked back-to-back. Interacts with the co-chaperonin GroES.

It localises to the cytoplasm. It catalyses the reaction ATP + H2O + a folded polypeptide = ADP + phosphate + an unfolded polypeptide.. Functionally, together with its co-chaperonin GroES, plays an essential role in assisting protein folding. The GroEL-GroES system forms a nano-cage that allows encapsulation of the non-native substrate proteins and provides a physical environment optimized to promote and accelerate protein folding. The sequence is that of Chaperonin GroEL from Serratia proteamaculans (strain 568).